Reading from the N-terminus, the 108-residue chain is MSIISSLTNAGRGVVNTVGGAAQGINSVKSSADRNIALTKNTGSTDSIDATRSSISKGDAPSAELDGTANEENGLLRETSMLAGFEDKKEALSNQIVASKIRNSVVQF.

Positions 41–56 (NTGSTDSIDATRSSIS) are enriched in polar residues. The segment at 41-73 (NTGSTDSIDATRSSISKGDAPSAELDGTANEEN) is disordered.

This sequence belongs to the HrpA type 1 family.

The protein localises to the secreted. The protein resides in the fimbrium. Major structural protein of the hrp pilus, which is a component of the type III secretion system (T3SS, Hrp secretion system) required for effector protein delivery, parasitism, and pathogenicity. The hrp pilus functions as a conduit for protein delivery into the host cell. Also, affects the expression of T3SS-associated genes. Required for full expression of genes that encode regulatory, secretion, and effector proteins of the T3SS. HrpA-mediated gene regulation apparently is through effect on the mRNA level of hrpR and hrpS. The sequence is that of Hrp pili protein HrpA (hrpA) from Pseudomonas savastanoi pv. glycinea (Pseudomonas syringae pv. glycinea).